A 249-amino-acid chain; its full sequence is Proteasome subunit alpha type-7-1A (249 aa).

This sequence belongs to the peptidase T1A family. The 26S proteasome consists of a 20S proteasome core and two 19S regulatory subunits. The 20S proteasome core is composed of 28 subunits that are arranged in four stacked rings, resulting in a barrel-shaped structure. The two end rings are each formed by seven alpha subunits, and the two central rings are each formed by seven beta subunits. The catalytic chamber with the active sites is on the inside of the barrel. In terms of tissue distribution, testis specific.

It is found in the cytoplasm. It localises to the nucleus. Its function is as follows. The proteasome is a multicatalytic proteinase complex which is characterized by its ability to cleave peptides with Arg, Phe, Tyr, Leu, and Glu adjacent to the leaving group at neutral or slightly basic pH. The proteasome has an ATP-dependent proteolytic activity. This chain is Proteasome subunit alpha type-7-1A (Prosalpha4T1), found in Drosophila melanogaster (Fruit fly).